The following is a 421-amino-acid chain: Flap endonuclease 1 (421 aa).

Residues 1 to 109 (MGIKGLAKLL…HELIKRREKR (109 aa)) form an N-domain region. Asp34 provides a ligand contact to Mg(2+). DNA is bound by residues Arg47 and Arg75. Residues Asp91, Glu163, Glu165, Asp184, and Asp186 each contribute to the Mg(2+) site. The tract at residues 127-258 (EQDKQSKRLV…KTALKLIREH (132 aa)) is I-domain. Glu163 provides a ligand contact to DNA. DNA is bound by residues Gly236 and Asp238. Asp238 lines the Mg(2+) pocket. The interval 284–307 (KKLDAQSDDDDEEGVESPSKEENN) is disordered. Acidic residues predominate over residues 289 to 298 (QSDDDDEEGV). The interaction with PCNA stretch occupies residues 379-387 (PQTRMDSFF). Positions 398–421 (SAAKRKADAAKAKAAVSKKKTKKH) are disordered.

This sequence belongs to the XPG/RAD2 endonuclease family. FEN1 subfamily. As to quaternary structure, interacts with PCNA. Three molecules of FEN1 bind to one PCNA trimer with each molecule binding to one PCNA monomer. PCNA stimulates the nuclease activity without altering cleavage specificity. It depends on Mg(2+) as a cofactor. Phosphorylated. Phosphorylation upon DNA damage induces relocalization to the nuclear plasma.

It is found in the nucleus. It localises to the nucleolus. Its subcellular location is the nucleoplasm. The protein localises to the mitochondrion. In terms of biological role, structure-specific nuclease with 5'-flap endonuclease and 5'-3' exonuclease activities involved in DNA replication and repair. During DNA replication, cleaves the 5'-overhanging flap structure that is generated by displacement synthesis when DNA polymerase encounters the 5'-end of a downstream Okazaki fragment. It enters the flap from the 5'-end and then tracks to cleave the flap base, leaving a nick for ligation. Also involved in the long patch base excision repair (LP-BER) pathway, by cleaving within the apurinic/apyrimidinic (AP) site-terminated flap. Acts as a genome stabilization factor that prevents flaps from equilibrating into structures that lead to duplications and deletions. Also possesses 5'-3' exonuclease activity on nicked or gapped double-stranded DNA, and exhibits RNase H activity. Also involved in replication and repair of rDNA and in repairing mitochondrial DNA. The chain is Flap endonuclease 1 from Phaeodactylum tricornutum (strain CCAP 1055/1).